Here is a 104-residue protein sequence, read N- to C-terminus: L-rhamnose mutarotase (104 aa).

Tyr-18 provides a ligand contact to substrate. Catalysis depends on His-22, which acts as the Proton donor. Residues Tyr-41 and 76–77 (WW) each bind substrate.

The protein belongs to the rhamnose mutarotase family. In terms of assembly, homodimer.

It is found in the cytoplasm. It carries out the reaction alpha-L-rhamnose = beta-L-rhamnose. The protein operates within carbohydrate metabolism; L-rhamnose metabolism. Involved in the anomeric conversion of L-rhamnose. This is L-rhamnose mutarotase from Burkholderia cenocepacia (strain HI2424).